The sequence spans 1038 residues: Eukaryotic translation initiation factor 3 subunit A (1038 aa).

Positions 92–121 form a coiled coil; the sequence is LKKFIELAEKKVTEAQAKADEIQSSLESAA. Positions 339–523 constitute a PCI domain; that stretch reads MTKAVSFVLL…GVLTFDTDVF (185 aa). The stretch at 611 to 899 forms a coiled coil; the sequence is IDKKKEAATD…QKQREEEAEA (289 aa). Composition is skewed to basic and acidic residues over residues 621–632 and 800–901; these read ALQRKQREEETR and RHEE…EARR. Disordered stretches follow at residues 621-641 and 800-1038; these read ALQR…QQLQ and RHEE…QQGQ. 2 stretches are compositionally biased toward low complexity: residues 943 to 952 and 976 to 993; these read KEAAGGAAPE and GASA…AAPS. A compositionally biased stretch (polar residues) spans 1002–1019; the sequence is DSGSSTPPSRTQTPATTS.

This sequence belongs to the eIF-3 subunit A family. In terms of assembly, component of the eukaryotic translation initiation factor 3 (eIF-3) complex.

The protein localises to the cytoplasm. Its function is as follows. RNA-binding component of the eukaryotic translation initiation factor 3 (eIF-3) complex, which is involved in protein synthesis of a specialized repertoire of mRNAs and, together with other initiation factors, stimulates binding of mRNA and methionyl-tRNAi to the 40S ribosome. The eIF-3 complex specifically targets and initiates translation of a subset of mRNAs involved in cell proliferation. The chain is Eukaryotic translation initiation factor 3 subunit A (tif32) from Aspergillus oryzae (strain ATCC 42149 / RIB 40) (Yellow koji mold).